A 398-amino-acid chain; its full sequence is GTP cyclohydrolase-2 (398 aa).

Positions Met1 to Glu172 are unknown. The GTP cyclohydrolase II stretch occupies residues Tyr173–Ala398. Residue Arg220–Ser224 coordinates GTP. Residues Cys225, Cys236, and Cys238 each coordinate Zn(2+). GTP is bound by residues Gln241, Glu263–Arg265, and Thr285. Asp297 (proton acceptor) is an active-site residue. Arg299 (nucleophile) is an active-site residue. Ser320 and Lys325 together coordinate GTP. The disordered stretch occupies residues Gln375–Ala398.

In the C-terminal section; belongs to the GTP cyclohydrolase II family. Zn(2+) is required as a cofactor.

It carries out the reaction GTP + 4 H2O = 2,5-diamino-6-hydroxy-4-(5-phosphoribosylamino)-pyrimidine + formate + 2 phosphate + 3 H(+). It participates in cofactor biosynthesis; riboflavin biosynthesis; 5-amino-6-(D-ribitylamino)uracil from GTP: step 1/4. Functionally, catalyzes the conversion of GTP to 2,5-diamino-6-ribosylamino-4(3H)-pyrimidinone 5'-phosphate (DARP), formate and pyrophosphate. This Xylella fastidiosa (strain 9a5c) protein is GTP cyclohydrolase-2 (ribA).